A 574-amino-acid polypeptide reads, in one-letter code: MHESQLTTSAAKPSRLGWFDDVLLLGIMAVLAGCGLIYEYLLSHYAGRILGALEAAIYTMIGLMIVSMGLGAFAARKIKDAFTGFVVLELTVALCGSLAILITAAVIGFGQQLPMLIASTLGLPPDQLPEGGMIGTLQKLSEYLPYFWGVLLGLMIGMEIPLIARVRQSLSDEHLLHNAGTIYGADYIGAGIGAAIWVGFMLAIDIQLAAALTASFNLLAGFVFIWRFWQKIQRPKLLLAAHLVVTGVLLLLAIQGPSWEQQFNNLLYKDKVVYAKATRFQQLTFTERLRGNGLSPVYALYINGRLQFSSSDEHIYHAFLVHPTLAASARHNKVLIIGGGDGLGLKQVLRWEPEQVTLLDLDAALVQLFKSPDPDMPERLSQALLSLNGNAFNDPRVTVIHDDAFNGVDKLIAKGDKYDAIIVDLPDPSHPDLNKLYSDYFYRKLKELISNDGALTVQSTSPYHAQKAFISVAKTLALAGFDVKQYHHNVPSFGEWGWSIATLDGKDAQHRLAQLTKLPIADDWLTLGLVKGAFEFPANFYQDATNIKPNELGSLQLYHYHQQAWSETQGLDLF.

7 helical membrane-spanning segments follow: residues Val-22 to Leu-42, Ala-55 to Ala-75, Leu-90 to Gly-110, Leu-144 to Ala-164, Ile-188 to Leu-208, Ala-209 to Trp-229, and Leu-237 to Pro-257. The segment at Ile-254 to His-510 is spermidine synthase. The 249-residue stretch at Pro-257–Gly-505 folds into the PABS domain. Gln-281 contacts S-methyl-5'-thioadenosine. Spermidine-binding residues include His-317 and Asp-341. S-methyl-5'-thioadenosine-binding positions include Asp-360 and Asp-403–Ala-404. Asp-424 acts as the Proton acceptor in catalysis.

It belongs to the spermidine/spermine synthase family. As to quaternary structure, homodimer or homotetramer.

Its subcellular location is the cell membrane. The enzyme catalyses S-adenosyl 3-(methylsulfanyl)propylamine + putrescine = S-methyl-5'-thioadenosine + spermidine + H(+). It functions in the pathway amine and polyamine biosynthesis; spermidine biosynthesis; spermidine from putrescine: step 1/1. Functionally, catalyzes the irreversible transfer of a propylamine group from the amino donor S-adenosylmethioninamine (decarboxy-AdoMet) to putrescine (1,4-diaminobutane) to yield spermidine. The protein is Polyamine aminopropyltransferase of Shewanella oneidensis (strain ATCC 700550 / JCM 31522 / CIP 106686 / LMG 19005 / NCIMB 14063 / MR-1).